Reading from the N-terminus, the 146-residue chain is 3-dehydroquinate dehydratase (146 aa).

The Proton acceptor role is filled by Tyr23. Positions 75, 81, and 88 each coordinate substrate. His101 functions as the Proton donor in the catalytic mechanism. Residues 102 to 103 (LS) and Arg112 each bind substrate.

This sequence belongs to the type-II 3-dehydroquinase family. In terms of assembly, homododecamer.

It catalyses the reaction 3-dehydroquinate = 3-dehydroshikimate + H2O. It participates in metabolic intermediate biosynthesis; chorismate biosynthesis; chorismate from D-erythrose 4-phosphate and phosphoenolpyruvate: step 3/7. In terms of biological role, catalyzes a trans-dehydration via an enolate intermediate. This Marinobacter nauticus (strain ATCC 700491 / DSM 11845 / VT8) (Marinobacter aquaeolei) protein is 3-dehydroquinate dehydratase.